Consider the following 280-residue polypeptide: MKRKKLVIGSILMGMTLSLSACGSSDNIVTTKSGSISESDFNKKLKENYGKQNLSEMVVEKVLHDKYKVTDEEVTKQLEELKDKMGDNFNTYMESNGVKNEDQLKEKLKLTFAFEKAIKATVTEKDIKDHYKPKLQVSHILVKDEKTAKEIKEKLNSGEDFAALAKQYSEDPGSKEKGGELSEFGPGMMVKEFEDAAYKLEVGQLSEPVKSSFGYHIIKLTDKKELKPYEEEKENIRKELEQQRIQDPQFHQQVTRDLLKNADIKVSDKDLKDTFKELEK.

A signal peptide spans 1–21 (MKRKKLVIGSILMGMTLSLSA). The N-palmitoyl cysteine moiety is linked to residue Cys-22. Cys-22 is lipidated: S-diacylglycerol cysteine. The 91-residue stretch at 132-222 (KPKLQVSHIL…FGYHIIKLTD (91 aa)) folds into the PpiC domain.

The protein belongs to the PrsA family.

The protein resides in the cell membrane. The enzyme catalyses [protein]-peptidylproline (omega=180) = [protein]-peptidylproline (omega=0). Its function is as follows. Plays a major role in protein secretion by helping the post-translocational extracellular folding of several secreted proteins. The sequence is that of Foldase protein PrsA 4 (prsA4) from Bacillus cereus (strain ATCC 14579 / DSM 31 / CCUG 7414 / JCM 2152 / NBRC 15305 / NCIMB 9373 / NCTC 2599 / NRRL B-3711).